The following is a 282-amino-acid chain: Deoxyribonuclease-1 (282 aa).

Positions 1–22 (MRGMKLLGALLALAALLQGAVS) are cleaved as a signal peptide. The N-linked (GlcNAc...) asparagine glycan is linked to Asn40. Glu100 is a catalytic residue. A disulfide bridge links Cys123 with Cys126. An N-linked (GlcNAc...) asparagine glycan is attached at Asn128. His156 is an active-site residue. Cysteines 195 and 231 form a disulfide.

This sequence belongs to the DNase I family. Requires Ca(2+) as cofactor. Mg(2+) serves as cofactor. In terms of tissue distribution, principally in tissues of the digestive system. Highest levels found in urine, but also relatively abundant in semen and saliva.

It localises to the secreted. The protein resides in the zymogen granule. It is found in the nucleus envelope. It catalyses the reaction Endonucleolytic cleavage to 5'-phosphodinucleotide and 5'-phosphooligonucleotide end-products.. In terms of biological role, serum endocuclease secreted into body fluids by a wide variety of exocrine and endocrine organs. Expressed by non-hematopoietic tissues and preferentially cleaves protein-free DNA. Among other functions, seems to be involved in cell death by apoptosis. Binds specifically to G-actin and blocks actin polymerization. Together with DNASE1L3, plays a key role in degrading neutrophil extracellular traps (NETs). NETs are mainly composed of DNA fibers and are released by neutrophils to bind pathogens during inflammation. Degradation of intravascular NETs by DNASE1 and DNASE1L3 is required to prevent formation of clots that obstruct blood vessels and cause organ damage following inflammation. This Homo sapiens (Human) protein is Deoxyribonuclease-1.